Here is a 552-residue protein sequence, read N- to C-terminus: HTH-type transcriptional regulator SgrR (552 aa).

The interval 163-493 (ELKPDLAHHW…DDLDTDAQQW (331 aa)) is solute-binding.

In terms of biological role, activates the small RNA gene sgrS under glucose-phosphate stress conditions as well as yfdZ. Represses its own transcription under both stress and non-stress conditions. Might act as a sensor of the intracellular accumulation of phosphoglucose by binding these molecules in its C-terminal solute-binding domain. This chain is HTH-type transcriptional regulator SgrR, found in Pectobacterium atrosepticum (strain SCRI 1043 / ATCC BAA-672) (Erwinia carotovora subsp. atroseptica).